The following is an 848-amino-acid chain: Translation initiation factor IF-2 (848 aa).

Residues 1–20 (MNESKGAVDSGLMSGKTERT) form a disordered region. The tr-type G domain maps to 346-516 (PRAPVVTVMG…LLMAELLELK (171 aa)). The G1 stretch occupies residues 355 to 362 (GHVDHGKT). 355–362 (GHVDHGKT) serves as a coordination point for GTP. The interval 380-384 (GITQH) is G2. The tract at residues 402–405 (DTPG) is G3. GTP contacts are provided by residues 402 to 406 (DTPGH) and 456 to 459 (NKID). A G4 region spans residues 456–459 (NKID). A G5 region spans residues 492–494 (SAK).

Belongs to the TRAFAC class translation factor GTPase superfamily. Classic translation factor GTPase family. IF-2 subfamily.

Its subcellular location is the cytoplasm. Its function is as follows. One of the essential components for the initiation of protein synthesis. Protects formylmethionyl-tRNA from spontaneous hydrolysis and promotes its binding to the 30S ribosomal subunits. Also involved in the hydrolysis of GTP during the formation of the 70S ribosomal complex. This Ehrlichia canis (strain Jake) protein is Translation initiation factor IF-2.